Here is a 358-residue protein sequence, read N- to C-terminus: Aromatic amino acid aminotransferase (358 aa).

At Lys-214 the chain carries N6-(pyridoxal phosphate)lysine.

The protein belongs to the class-II pyridoxal-phosphate-dependent aminotransferase family. As to quaternary structure, homodimer. Pyridoxal 5'-phosphate serves as cofactor.

It catalyses the reaction an aromatic L-alpha-amino acid + 2-oxoglutarate = an aromatic oxo-acid + L-glutamate. Its function is as follows. Aminotransferase that catalyzes the conversion of aromatic amino acids and 2-oxoglutarate into corresponding aromatic oxo acids and L-glutamate. This Rhodococcus erythropolis (strain PR4 / NBRC 100887) protein is Aromatic amino acid aminotransferase.